We begin with the raw amino-acid sequence, 550 residues long: Glucose import ATP-binding protein TsgD13 (550 aa).

ABC transporter domains lie at 7–270 (LRME…VGRE) and 287–533 (LRAR…TGGG). An ATP-binding site is contributed by 39–46 (GENGAGKS). The segment at 529 to 550 (MTGGGDATATAGAQVRGLGGSS) is disordered.

It belongs to the ABC transporter superfamily. The complex is composed of two ATP-binding proteins (TsgD13), two transmembrane proteins (TsgB13 and TsgC13) and a solute-binding protein (TsgA13).

The protein localises to the cell membrane. The enzyme catalyses D-glucose(out) + ATP + H2O = D-glucose(in) + ADP + phosphate + H(+). Its function is as follows. Part of an ABC transporter complex involved in glucose import. Responsible for energy coupling to the transport system. This is Glucose import ATP-binding protein TsgD13 (tsgD13) from Haloferax volcanii (strain ATCC 29605 / DSM 3757 / JCM 8879 / NBRC 14742 / NCIMB 2012 / VKM B-1768 / DS2) (Halobacterium volcanii).